The following is a 220-amino-acid chain: GTP cyclohydrolase 1 (220 aa).

Positions 109, 112, and 180 each coordinate Zn(2+).

This sequence belongs to the GTP cyclohydrolase I family. In terms of assembly, toroid-shaped homodecamer, composed of two pentamers of five dimers.

It carries out the reaction GTP + H2O = 7,8-dihydroneopterin 3'-triphosphate + formate + H(+). It functions in the pathway cofactor biosynthesis; 7,8-dihydroneopterin triphosphate biosynthesis; 7,8-dihydroneopterin triphosphate from GTP: step 1/1. The chain is GTP cyclohydrolase 1 from Yersinia pseudotuberculosis serotype O:1b (strain IP 31758).